Reading from the N-terminus, the 428-residue chain is MNGGDMNQQQQQQQQQHQQQQQQWLAMQQYQQQWMAMQYPAAAMAMQQQMMYGQQYMPYYQQHQQQQKMQQSPTQIQSSSEDNKTIWIGDLQQWMDESYLHSCFSQAGEVISVKIIRNKQTGQSERYGFVEFNTHAAAEKVLQSYNGTMMPNTEQPFRLNWAGFSTGEKRAETGSDFSIFVGDLASDVTDTMLRDTFASRYPSLKGAKVVVDANTGHSKGYGFVRFGDESERSRAMTEMNGVYCSSRAMRIGVATPKKPSAHEQYSSQAVILSGGYASNGAATHGSQSDGDSSNTTIFVGGLDSEVTDEELRQSFNQFGEVVSVKIPAGKGCGFVQFSDRSSAQEAIQKLSGAIIGKQAVRLSWGRSPANKQMRTDSGSQWNGGYNGRQNYGGYGYGASQNQDSGMYATGAAYGASSNRYGNHQQPVS.

RRM domains are found at residues 84–164, 177–256, and 295–367; these read KTIW…WAGF, FSIF…VATP, and TTIF…WGRS.

This sequence belongs to the polyadenylate-binding RBP47 family. Interacts with the poly(A) tail of mRNA in nucleus. Constitutively expressed in leaves, roots, and stems.

Its subcellular location is the nucleus. The protein resides in the cytoplasmic granule. Functionally, heterogeneous nuclear ribonucleoprotein (hnRNP)-protein binding the poly(A) tail of mRNA and probably involved in some steps of pre-mRNA maturation. The polypeptide is Polyadenylate-binding protein RBP47 (RBP47) (Nicotiana plumbaginifolia (Leadwort-leaved tobacco)).